Reading from the N-terminus, the 255-residue chain is Ribonuclease PH (255 aa).

Phosphate contacts are provided by residues Arg-86 and 124 to 126 (GTR).

Belongs to the RNase PH family. As to quaternary structure, homohexameric ring arranged as a trimer of dimers.

It carries out the reaction tRNA(n+1) + phosphate = tRNA(n) + a ribonucleoside 5'-diphosphate. Functionally, phosphorolytic 3'-5' exoribonuclease that plays an important role in tRNA 3'-end maturation. Removes nucleotide residues following the 3'-CCA terminus of tRNAs; can also add nucleotides to the ends of RNA molecules by using nucleoside diphosphates as substrates, but this may not be physiologically important. Probably plays a role in initiation of 16S rRNA degradation (leading to ribosome degradation) during starvation. The protein is Ribonuclease PH of Geobacillus sp. (strain WCH70).